The following is a 322-amino-acid chain: Protein farnesyltransferase/geranylgeranyltransferase type-1 subunit alpha (322 aa).

Residues 1–27 form a disordered region; the sequence is MSSSEEDDGYVPFSKRPEWSDVKPLAQ. PFTA repeat units follow at residues 62–95, 103–136, 138–171, 173–205, 213–246, and 287–321; these read RVLD…EQDE, QEMN…IGSD, KEKE…RDWN, ELAM…NPSP, REVE…KIST, and NSLN…LKLI.

Belongs to the protein prenyltransferase subunit alpha family. Heterodimer of fntA and fntB (farnesyltransferase). Heterodimer of an alpha and a beta subunit. It depends on Mg(2+) as a cofactor.

It carries out the reaction L-cysteinyl-[protein] + (2E,6E)-farnesyl diphosphate = S-(2E,6E)-farnesyl-L-cysteinyl-[protein] + diphosphate. The catalysed reaction is geranylgeranyl diphosphate + L-cysteinyl-[protein] = S-geranylgeranyl-L-cysteinyl-[protein] + diphosphate. In terms of biological role, catalyzes the transfer of a farnesyl or geranyl-geranyl moiety from farnesyl or geranyl-geranyl diphosphate to a cysteine at the fourth position from the C-terminus of several proteins having the C-terminal sequence Cys-aliphatic-aliphatic-X. The alpha subunit is thought to participate in a stable complex with the substrate. The beta subunit binds the peptide substrate. The sequence is that of Protein farnesyltransferase/geranylgeranyltransferase type-1 subunit alpha (fntA) from Dictyostelium discoideum (Social amoeba).